We begin with the raw amino-acid sequence, 87 residues long: Small ribosomal subunit protein uS15 (87 aa).

It belongs to the universal ribosomal protein uS15 family. As to quaternary structure, part of the 30S ribosomal subunit. Forms a bridge to the 50S subunit in the 70S ribosome, contacting the 23S rRNA.

In terms of biological role, one of the primary rRNA binding proteins, it binds directly to 16S rRNA where it helps nucleate assembly of the platform of the 30S subunit by binding and bridging several RNA helices of the 16S rRNA. Forms an intersubunit bridge (bridge B4) with the 23S rRNA of the 50S subunit in the ribosome. In Dehalococcoides mccartyi (strain ATCC BAA-2266 / KCTC 15142 / 195) (Dehalococcoides ethenogenes (strain 195)), this protein is Small ribosomal subunit protein uS15.